Here is a 993-residue protein sequence, read N- to C-terminus: UPF0182 protein ROP_64500 (993 aa).

The next 7 helical transmembrane spans lie at Val-18–Ser-38, Leu-63–Leu-83, Leu-114–Ser-134, Trp-174–Gly-194, Val-211–Asp-231, Lys-260–Leu-280, and Met-288–Val-308. Positions Thr-904–Val-948 are disordered. A compositionally biased stretch (low complexity) spans Ala-908–Pro-926. Over residues Pro-933 to Pro-942 the composition is skewed to pro residues.

This sequence belongs to the UPF0182 family.

It localises to the cell membrane. This is UPF0182 protein ROP_64500 from Rhodococcus opacus (strain B4).